The chain runs to 639 residues: Polyvinylalcohol dehydrogenase (639 aa).

The N-terminal stretch at 1–33 (MQQNIERNQVSMTTSRFVWGAVMALVALGSASA) is a signal peptide. In terms of domain architecture, Cytochrome c spans 36–152 (LNLPDGAALY…TPDQWNGWGA (117 aa)). 3 residues coordinate heme: C49, C52, and H53.

The protein belongs to the bacterial PQQ dehydrogenase family. In terms of assembly, monomer. The cofactor is pyrroloquinoline quinone.

It localises to the cytoplasm. The enzyme catalyses a polyvinyl alcohol + 2n Fe(III)-[cytochrome c] = an oxidized polyvinyl alcohol + 2n Fe(II)-[cytochrome c] + 2n H(+). Functionally, catalyzes the oxidation of polyvinyl alcohol (PVA) in the polyvinyl alcohol degradation pathway. The sequence is that of Polyvinylalcohol dehydrogenase (pvaA) from Pseudomonas sp.